The primary structure comprises 315 residues: Methionyl-tRNA formyltransferase (315 aa).

The interval 2–189 (SESLRIIFAG…LITTLKQLAD (188 aa)) is N-terminal domain. 113–116 (SLLP) lines the (6S)-5,6,7,8-tetrahydrofolate pocket. Residues 210 to 315 (KEEARIDWSL…EWFVPGNRLA (106 aa)) form a C-terminal domain region.

The protein belongs to the Fmt family.

It catalyses the reaction L-methionyl-tRNA(fMet) + (6R)-10-formyltetrahydrofolate = N-formyl-L-methionyl-tRNA(fMet) + (6S)-5,6,7,8-tetrahydrofolate + H(+). Attaches a formyl group to the free amino group of methionyl-tRNA(fMet). The formyl group appears to play a dual role in the initiator identity of N-formylmethionyl-tRNA by promoting its recognition by IF2 and preventing the misappropriation of this tRNA by the elongation apparatus. The sequence is that of Methionyl-tRNA formyltransferase from Escherichia coli O6:H1 (strain CFT073 / ATCC 700928 / UPEC).